A 34-amino-acid polypeptide reads, in one-letter code: KALYAPFDATFPNQNQTRNKAVDTAPCEWYRRVY.

This sequence belongs to the cytochrome c oxidase subunit 6B family. As to quaternary structure, component of the cytochrome c oxidase (complex IV, CIV), a multisubunit enzyme composed of 14 subunits. The complex is composed of a catalytic core of 3 subunits MT-CO1, MT-CO2 and MT-CO3, encoded in the mitochondrial DNA, and 11 supernumerary subunits COX4I, COX5A, COX5B, COX6A, COX6B, COX6C, COX7A, COX7B, COX7C, COX8 and NDUFA4, which are encoded in the nuclear genome. The complex exists as a monomer or a dimer and forms supercomplexes (SCs) in the inner mitochondrial membrane with NADH-ubiquinone oxidoreductase (complex I, CI) and ubiquinol-cytochrome c oxidoreductase (cytochrome b-c1 complex, complex III, CIII), resulting in different assemblies (supercomplex SCI(1)III(2)IV(1) and megacomplex MCI(2)III(2)IV(2)). Post-translationally, the N-terminus is blocked.

The protein resides in the mitochondrion inner membrane. It functions in the pathway energy metabolism; oxidative phosphorylation. Component of the cytochrome c oxidase, the last enzyme in the mitochondrial electron transport chain which drives oxidative phosphorylation. The respiratory chain contains 3 multisubunit complexes succinate dehydrogenase (complex II, CII), ubiquinol-cytochrome c oxidoreductase (cytochrome b-c1 complex, complex III, CIII) and cytochrome c oxidase (complex IV, CIV), that cooperate to transfer electrons derived from NADH and succinate to molecular oxygen, creating an electrochemical gradient over the inner membrane that drives transmembrane transport and the ATP synthase. Cytochrome c oxidase is the component of the respiratory chain that catalyzes the reduction of oxygen to water. Electrons originating from reduced cytochrome c in the intermembrane space (IMS) are transferred via the dinuclear copper A center (CU(A)) of subunit 2 and heme A of subunit 1 to the active site in subunit 1, a binuclear center (BNC) formed by heme A3 and copper B (CU(B)). The BNC reduces molecular oxygen to 2 water molecules using 4 electrons from cytochrome c in the IMS and 4 protons from the mitochondrial matrix. The protein is Cytochrome c oxidase subunit 6B of Thunnus obesus (Bigeye tuna).